Reading from the N-terminus, the 265-residue chain is Uridylate kinase (265 aa).

The interval 1–29 is disordered; the sequence is MTESREPHVAGSAAPRPEPANGLASGQPS. ATP is bound at residue 40–43; the sequence is KLGG. Gly-81 contributes to the UMP binding site. ATP contacts are provided by Gly-82 and Arg-86. Residues Asp-101 and 162–169 contribute to the UMP site; that span reads MGLPYFST. The ATP site is built by Phe-195 and Asp-198.

The protein belongs to the UMP kinase family. In terms of assembly, homohexamer.

It is found in the cytoplasm. The enzyme catalyses UMP + ATP = UDP + ADP. The protein operates within pyrimidine metabolism; CTP biosynthesis via de novo pathway; UDP from UMP (UMPK route): step 1/1. Inhibited by UTP. Catalyzes the reversible phosphorylation of UMP to UDP. The chain is Uridylate kinase from Mycobacterium avium (strain 104).